The primary structure comprises 181 residues: Small ribosomal subunit protein uS4 (181 aa).

The S4 RNA-binding domain occupies 108 to 180 (RRLQTIVYRK…GERQRIMNQR (73 aa)).

This sequence belongs to the universal ribosomal protein uS4 family. In terms of assembly, part of the 30S ribosomal subunit. Contacts protein S5. The interaction surface between S4 and S5 is involved in control of translational fidelity.

Its function is as follows. One of the primary rRNA binding proteins, it binds directly to 16S rRNA where it nucleates assembly of the body of the 30S subunit. With S5 and S12 plays an important role in translational accuracy. In Methanocorpusculum labreanum (strain ATCC 43576 / DSM 4855 / Z), this protein is Small ribosomal subunit protein uS4.